We begin with the raw amino-acid sequence, 633 residues long: DEAD-box ATP-dependent RNA helicase 27 (633 aa).

A compositionally biased stretch (basic and acidic residues) spans 1-17; it reads MANLDMEQHSSENEEIK. The tract at residues 1–147 is disordered; the sequence is MANLDMEQHS…DKEEEKKLEE (147 aa). Residues 2–34 adopt a coiled-coil conformation; sequence ANLDMEQHSSENEEIKKKKHKKRARDEAKKLKQ. Composition is skewed to acidic residues over residues 37-47 and 74-83; these read MEEEPDHEDGD and DDGEDEAVAE. Residues 88–97 show a composition bias toward basic residues; it reads KKKKKNKKLQ. Composition is skewed to acidic residues over residues 103–114 and 131–140; these read NDEEDEVIAEEE and SEEEEVEDKE. Residues 117–153 are a coiled coil; that stretch reads KKKKKKQRKDTEAKSEEEEVEDKEEEKKLEETSIMTN. The short motif at 154 to 182 is the Q motif element; sequence KTFESLSLSDNTYKSIKEMGFARMTQIQA. One can recognise a Helicase ATP-binding domain in the interval 185–360; it reads IPPLMMGEDV…RVSLTSPVYI (176 aa). 198-205 provides a ligand contact to ATP; sequence ARTGSGKT. Positions 308 to 311 match the DEAD box motif; it reads DEAD. A Helicase C-terminal domain is found at 386 to 534; sequence RLLFLLTFLK…EHEFEEKKLL (149 aa). The interval 608–633 is disordered; that stretch reads KREPVNKFKRGRGGGRPGGKSKFERY.

It belongs to the DEAD box helicase family. DDX18/HAS1 subfamily.

The enzyme catalyses ATP + H2O = ADP + phosphate + H(+). The sequence is that of DEAD-box ATP-dependent RNA helicase 27 (RH27) from Arabidopsis thaliana (Mouse-ear cress).